Consider the following 431-residue polypeptide: Adenylosuccinate synthetase (431 aa).

Residues 13–19 (GDEGKGK) and 41–43 (GHT) each bind GTP. The active-site Proton acceptor is the D14. Mg(2+) contacts are provided by D14 and G41. IMP contacts are provided by residues 14 to 17 (DEGK), 39 to 42 (NAGH), T130, R144, Q225, T240, and R304. The active-site Proton donor is the H42. 300-306 (ATTGRKR) lines the substrate pocket. GTP contacts are provided by residues R306, 332-334 (KLD), and 415-417 (STG).

This sequence belongs to the adenylosuccinate synthetase family. Homodimer. The cofactor is Mg(2+).

It is found in the cytoplasm. The enzyme catalyses IMP + L-aspartate + GTP = N(6)-(1,2-dicarboxyethyl)-AMP + GDP + phosphate + 2 H(+). It functions in the pathway purine metabolism; AMP biosynthesis via de novo pathway; AMP from IMP: step 1/2. Functionally, plays an important role in the de novo pathway of purine nucleotide biosynthesis. Catalyzes the first committed step in the biosynthesis of AMP from IMP. This chain is Adenylosuccinate synthetase, found in Shewanella oneidensis (strain ATCC 700550 / JCM 31522 / CIP 106686 / LMG 19005 / NCIMB 14063 / MR-1).